The chain runs to 236 residues: MADDWESAADSEVVIRPTGAASVNKWEGEDEDEDIKDSWEDEEEKKDEEKPTKTEAPAKPKPNKALKAKLEQQARLEEEAEAQRVANLSPAEKLAEKLRLQKIQEASDLKHAQEAFGVTSTCGGLDAFNPESKEEFKEFGATLSWKVSQFRESEHFPQFVEDLVRSLCVNLSAADIKKVKMNVEILHSEKLKLEKANAKKPAGKGKGKVTLRTENDDIDGYQKYGNDFTEDYDDFM.

The interval 1–84 (MADDWESAAD…RLEEEAEAQR (84 aa)) is disordered. The segment covering 28–46 (GEDEDEDIKDSWEDEEEKK) has biased composition (acidic residues). Basic and acidic residues-rich tracts occupy residues 47 to 58 (DEEKPTKTEAPA) and 68 to 77 (AKLEQQARLE).

This sequence belongs to the eIF-3 subunit J family. As to quaternary structure, component of the eukaryotic translation initiation factor 3 (eIF-3) complex. The eIF-3 complex interacts with pix.

It localises to the cytoplasm. Component of the eukaryotic translation initiation factor 3 (eIF-3) complex, which is involved in protein synthesis of a specialized repertoire of mRNAs and, together with other initiation factors, stimulates binding of mRNA and methionyl-tRNAi to the 40S ribosome. The eIF-3 complex specifically targets and initiates translation of a subset of mRNAs involved in cell proliferation. This chain is Eukaryotic translation initiation factor 3 subunit J, found in Drosophila yakuba (Fruit fly).